The following is a 544-amino-acid chain: GMP synthase [glutamine-hydrolyzing] (544 aa).

In terms of domain architecture, Glutamine amidotransferase type-1 spans 12 to 210 (TILILDFGSQ…VKNVCGVRDG (199 aa)). C88 functions as the Nucleophile in the catalytic mechanism. Residues H184 and E186 contribute to the active site. Residues 211-419 (WSMESFIPKE…LNIPEHLVGR (209 aa)) form the GMPS ATP-PPase domain. 239-245 (SGGVDST) contacts ATP. The XMP site is built by R312, D481, K536, and E542.

As to quaternary structure, homodimer. Also forms a small population of homotetramers. Mg(2+) is required as a cofactor.

It localises to the cytoplasm. The protein resides in the cytosol. The enzyme catalyses XMP + L-glutamine + ATP + H2O = GMP + L-glutamate + AMP + diphosphate + 2 H(+). Its pathway is purine metabolism; GMP biosynthesis; GMP from XMP (L-Gln route): step 1/1. The enzyme is inhibited by ECC1385; although this compound fails to inhibit growth of the organism. Its function is as follows. Catalyzes the conversion of xanthine monophosphate (XMP) to GMP in the presence of glutamine and ATP through an adenyl-XMP intermediate. The protein is GMP synthase [glutamine-hydrolyzing] of Cryptococcus neoformans var. grubii serotype A (strain H99 / ATCC 208821 / CBS 10515 / FGSC 9487) (Filobasidiella neoformans var. grubii).